The following is a 555-amino-acid chain: Protein FAM234A (555 aa).

A compositionally biased stretch (basic and acidic residues) spans 1-22 (MMDNKDLEAEIHPLKNEDKKSQ). The interval 1–40 (MMDNKDLEAEIHPLKNEDKKSQENPGNLPRNEDNLKSKPV) is disordered. Residues 1 to 49 (MMDNKDLEAEIHPLKNEDKKSQENPGNLPRNEDNLKSKPVPSRLSRCRT) lie on the Cytoplasmic side of the membrane. The residue at position 21 (serine 21) is a Phosphoserine. The chain crosses the membrane as a helical; Signal-anchor for type II membrane protein span at residues 50–70 (VAFFLSLFTCLFVVFVLSFII). At 71 to 555 (PCPDRPSSQG…FSRLRYRSEM (485 aa)) the chain is on the extracellular side. Residues asparagine 116, asparagine 120, asparagine 317, asparagine 392, and asparagine 476 are each glycosylated (N-linked (GlcNAc...) asparagine).

It belongs to the FAM234 family.

The protein resides in the membrane. In Mus musculus (Mouse), this protein is Protein FAM234A.